A 1422-amino-acid chain; its full sequence is Cardiac-enriched FHL2-interacting protein (1422 aa).

The segment at 1 to 23 (MQGNKKCADGFSDTSSIGSVLDE) is disordered. At Thr119 the chain carries Phosphothreonine. 9 disordered regions span residues 151 to 177 (RTEA…KFAH), 199 to 265 (AGVS…GRGK), 279 to 443 (SAFE…SSPF), 459 to 500 (LETS…KAPS), 516 to 718 (YSPL…SDSQ), 731 to 850 (FSTS…TNKH), 877 to 1127 (VSSE…HLER), 1142 to 1244 (TGAA…GWEP), and 1353 to 1422 (RQGS…EGVS). The span at 201 to 210 (VSSTHQSSHQ) shows a compositional bias: polar residues. Basic and acidic residues-rich tracts occupy residues 284–298 (WDAH…KDIT) and 305–315 (KAPKHYEDMPL). Position 327 is a phosphoserine (Ser327). Residues 342-351 (SPSGIQSTSG) show a composition bias toward polar residues. Positions 395-405 (GPHDASEDKKQ) are enriched in basic and acidic residues. Positions 461–470 (TSDTQPVETS) are enriched in polar residues. Ser472 bears the Phosphoserine mark. Basic and acidic residues-rich tracts occupy residues 481–495 (QEKE…DSYK), 524–537 (GFDE…DGKQ), and 579–588 (PAMDSRESFA). Residues 590-606 (SHPTFSSPSASSKTHFS) show a composition bias toward low complexity. Basic and acidic residues-rich tracts occupy residues 611–622 (AAERNSHEKEEA), 635–644 (WHPDSRENLP), and 653–675 (CNRD…EKRL). A compositionally biased stretch (low complexity) spans 731–744 (FSTSSSDQSFASFE). The span at 790 to 801 (GVEEHRQKETQR) shows a compositional bias: basic and acidic residues. A Phosphoserine modification is found at Ser815. Over residues 828 to 839 (ADKDTALSHAKD) the composition is skewed to basic and acidic residues. 2 stretches are compositionally biased toward polar residues: residues 907-926 (SESQ…STEQ) and 944-954 (QDETSQQTRKG). Positions 975–991 (ADERLAHEKSRSADSGK) are enriched in basic and acidic residues. Residues 1048 to 1067 (AATSPNPSSLGGSSTCSPAA) show a composition bias toward polar residues. Over residues 1087–1099 (PPGPGPWASPGPS) the composition is skewed to pro residues. A compositionally biased stretch (basic residues) spans 1173–1184 (RRAKKLASKRRK). Residues 1185-1202 (SDQMSEKHTEAWEGKSFT) show a composition bias toward basic and acidic residues. Residues 1353–1366 (RQGSSHRPQSSQGA) show a composition bias toward polar residues. Positions 1411–1422 (DDLEDFATEGVS) are enriched in acidic residues.

In terms of assembly, interacts with FHL2.

Its subcellular location is the cytoplasm. The protein localises to the myofibril. It is found in the sarcomere. The protein resides in the z line. Its function is as follows. Plays an important role in cardiomyocyte hypertrophy via activation of the calcineurin/NFAT signaling pathway. The protein is Cardiac-enriched FHL2-interacting protein of Rattus norvegicus (Rat).